The sequence spans 68 residues: Copper transport protein ATOX1 (68 aa).

The 63-residue stretch at 1-63 (MPKHEFSVDM…TLEKTGKAVS (63 aa)) folds into the HMA domain. Cu cation-binding residues include Cys12 and Cys15. The residue at position 47 (Ser47) is a Phosphoserine. Lys60 carries the post-translational modification N6-acetyllysine.

Belongs to the ATX1 family. As to quaternary structure, homodimer. Interacts with ATP7B. Interacts with ATP7A. Interacts (via dimer form) with SLC31A1 (via C-terminal domain); this interaction improves ATOX1 stability and controls intracellular Cu(I) levels.

Its function is as follows. Binds and deliver cytosolic copper to the copper ATPase proteins. May be important in cellular antioxidant defense. The protein is Copper transport protein ATOX1 of Canis lupus familiaris (Dog).